The sequence spans 118 residues: Co-chaperonin GroES (118 aa).

This sequence belongs to the GroES chaperonin family. In terms of assembly, heptamer of 7 subunits arranged in a ring. Interacts with the chaperonin GroEL.

It is found in the cytoplasm. Its function is as follows. Together with the chaperonin GroEL, plays an essential role in assisting protein folding. The GroEL-GroES system forms a nano-cage that allows encapsulation of the non-native substrate proteins and provides a physical environment optimized to promote and accelerate protein folding. GroES binds to the apical surface of the GroEL ring, thereby capping the opening of the GroEL channel. The protein is Co-chaperonin GroES of Helicobacter acinonychis (strain Sheeba).